Here is a 408-residue protein sequence, read N- to C-terminus: Neutral cholesterol ester hydrolase 1 (408 aa).

The Cytoplasmic portion of the chain corresponds to 1-4; sequence MRSS. The chain crosses the membrane as a helical; Signal-anchor for type II membrane protein span at residues 5 to 25; sequence CVLLAALLALAAYYVYIPLPS. Over 26–408 the chain is Lumenal; that stretch reads AVSDPWKLML…SYIKWLDQNL (383 aa). Positions 113–115 match the Involved in the stabilization of the negatively charged intermediate by the formation of the oxyanion hole motif; sequence HGG. Ser191 is a catalytic residue. Asn270 is a glycosylation site (N-linked (GlcNAc...) asparagine). Residue Asp348 is part of the active site. Residue Asn367 is glycosylated (N-linked (GlcNAc...) asparagine). Residue His378 is part of the active site. The N-linked (GlcNAc...) asparagine glycan is linked to Asn389.

The protein belongs to the 'GDXG' lipolytic enzyme family. N-glycosylated. In terms of tissue distribution, present in brain, heart, kidney, lung, spinal cord and testis but not liver (at protein level). Expressed in peritoneal macrophages and kidney.

It is found in the cell membrane. Its subcellular location is the microsome. It carries out the reaction a 1-O-alkyl-2-acetyl-sn-glycerol + H2O = a 1-O-alkyl-sn-glycerol + acetate + H(+). It catalyses the reaction 1-O-hexadecyl-2-acetyl-sn-glycerol + H2O = 1-O-hexadecyl-sn-glycerol + acetate + H(+). The catalysed reaction is a cholesterol ester + H2O = cholesterol + a fatty acid + H(+). The enzyme catalyses cholesteryl (9Z-octadecenoate) + H2O = cholesterol + (9Z)-octadecenoate + H(+). Inhibited by bulky trifluoromethyl ketones. Hydrolyzes 2-acetyl monoalkylglycerol ether (1-O-alkyl-2-acetyl-sn-glycerol), the penultimate precursor of the pathway for de novo synthesis of platelet-activating factor. May be responsible for the hydrolysis of cholesterol esters (such as cholesteryl (9Z-octadecenoate)) in macrophages. Also involved in organ detoxification by hydrolyzing exogenous organophosphorus compounds. The chain is Neutral cholesterol ester hydrolase 1 (Nceh1) from Mus musculus (Mouse).